We begin with the raw amino-acid sequence, 80 residues long: ATP synthase subunit c (80 aa).

2 consecutive transmembrane segments (helical) span residues 11 to 31 and 54 to 74; these read IAAT…IGIL and FIVM…GLYI.

This sequence belongs to the ATPase C chain family. F-type ATPases have 2 components, F(1) - the catalytic core - and F(0) - the membrane proton channel. F(1) has five subunits: alpha(3), beta(3), gamma(1), delta(1), epsilon(1). F(0) has three main subunits: a(1), b(2) and c(10-14). The alpha and beta chains form an alternating ring which encloses part of the gamma chain. F(1) is attached to F(0) by a central stalk formed by the gamma and epsilon chains, while a peripheral stalk is formed by the delta and b chains.

The protein resides in the cell membrane. Its function is as follows. F(1)F(0) ATP synthase produces ATP from ADP in the presence of a proton or sodium gradient. F-type ATPases consist of two structural domains, F(1) containing the extramembraneous catalytic core and F(0) containing the membrane proton channel, linked together by a central stalk and a peripheral stalk. During catalysis, ATP synthesis in the catalytic domain of F(1) is coupled via a rotary mechanism of the central stalk subunits to proton translocation. Functionally, key component of the F(0) channel; it plays a direct role in translocation across the membrane. A homomeric c-ring of between 10-14 subunits forms the central stalk rotor element with the F(1) delta and epsilon subunits. The chain is ATP synthase subunit c from Baumannia cicadellinicola subsp. Homalodisca coagulata.